We begin with the raw amino-acid sequence, 118 residues long: ATP synthase subunit c (118 aa).

A run of 2 helical transmembrane segments spans residues 34–54 and 88–108; these read AIFA…GAVG and MAMA…LIFA.

This sequence belongs to the ATPase C chain family. In terms of assembly, F-type ATPases have 2 components, F(1) - the catalytic core - and F(0) - the membrane proton channel. F(1) has five subunits: alpha(3), beta(3), gamma(1), delta(1), epsilon(1). F(0) has three main subunits: a(1), b(2) and c(10-14). The alpha and beta chains form an alternating ring which encloses part of the gamma chain. F(1) is attached to F(0) by a central stalk formed by the gamma and epsilon chains, while a peripheral stalk is formed by the delta and b chains.

Its subcellular location is the cell inner membrane. Functionally, f(1)F(0) ATP synthase produces ATP from ADP in the presence of a proton or sodium gradient. F-type ATPases consist of two structural domains, F(1) containing the extramembraneous catalytic core and F(0) containing the membrane proton channel, linked together by a central stalk and a peripheral stalk. During catalysis, ATP synthesis in the catalytic domain of F(1) is coupled via a rotary mechanism of the central stalk subunits to proton translocation. Its function is as follows. Key component of the F(0) channel; it plays a direct role in translocation across the membrane. A homomeric c-ring of between 10-14 subunits forms the central stalk rotor element with the F(1) delta and epsilon subunits. This is ATP synthase subunit c from Syntrophus aciditrophicus (strain SB).